The following is a 233-amino-acid chain: Leucyl/phenylalanyl-tRNA--protein transferase (233 aa).

The protein belongs to the L/F-transferase family.

The protein localises to the cytoplasm. The enzyme catalyses N-terminal L-lysyl-[protein] + L-leucyl-tRNA(Leu) = N-terminal L-leucyl-L-lysyl-[protein] + tRNA(Leu) + H(+). It carries out the reaction N-terminal L-arginyl-[protein] + L-leucyl-tRNA(Leu) = N-terminal L-leucyl-L-arginyl-[protein] + tRNA(Leu) + H(+). It catalyses the reaction L-phenylalanyl-tRNA(Phe) + an N-terminal L-alpha-aminoacyl-[protein] = an N-terminal L-phenylalanyl-L-alpha-aminoacyl-[protein] + tRNA(Phe). Its function is as follows. Functions in the N-end rule pathway of protein degradation where it conjugates Leu, Phe and, less efficiently, Met from aminoacyl-tRNAs to the N-termini of proteins containing an N-terminal arginine or lysine. This chain is Leucyl/phenylalanyl-tRNA--protein transferase, found in Chromobacterium violaceum (strain ATCC 12472 / DSM 30191 / JCM 1249 / CCUG 213 / NBRC 12614 / NCIMB 9131 / NCTC 9757 / MK).